The chain runs to 183 residues: Translocon-associated protein subunit beta (183 aa).

A signal peptide spans 1 to 17 (MRLLSFVVLALFAVTQA). Over 18 to 149 (EEGARLLASK…DRRFSPHFLD (132 aa)) the chain is Lumenal. Residues asparagine 88 and asparagine 104 are each glycosylated (N-linked (GlcNAc...) asparagine). Residues 150–169 (WAAFGVMTLPSIGIPLLLWY) traverse the membrane as a helical segment. At 170 to 183 (SSKRKYDTPKTKKN) the chain is on the cytoplasmic side.

This sequence belongs to the TRAP-beta family. As to quaternary structure, heterotetramer of TRAP-alpha, TRAP-beta, TRAP-delta and TRAP-gamma. Interacts with STING1.

It is found in the endoplasmic reticulum membrane. In terms of biological role, TRAP proteins are part of a complex whose function is to bind calcium to the ER membrane and thereby regulate the retention of ER resident proteins. The protein is Translocon-associated protein subunit beta (SSR2) of Homo sapiens (Human).